Consider the following 201-residue polypeptide: uncharacterized protein (201 aa).

The next 4 membrane-spanning stretches (helical) occupy residues 9–29 (YNVF…ILVA), 42–62 (FLFV…FFDV), 86–106 (SGVI…VVMV), and 126–146 (LPYL…SIGM). Composition is skewed to basic and acidic residues over residues 165-174 (EPTDPNKTDN) and 182-191 (DENKKNEKEQ). The tract at residues 165–201 (EPTDPNKTDNRAVVINLDENKKNEKEQSPPSAEMTSL) is disordered. A compositionally biased stretch (polar residues) spans 192–201 (SPPSAEMTSL).

It is found in the cell membrane. This is an uncharacterized protein from Mycoplasma genitalium (strain ATCC 33530 / DSM 19775 / NCTC 10195 / G37) (Mycoplasmoides genitalium).